A 942-amino-acid chain; its full sequence is Homeobox transcription factor phx1 (942 aa).

4 stretches are compositionally biased toward polar residues: residues 1–19, 61–73, 99–116, and 122–135; these read MRSY…NINY, HLQG…TNPN, ADNN…TNPS, and IVKS…SKQN. 5 disordered regions span residues 1 to 54, 61 to 80, 87 to 172, 604 to 651, and 892 to 922; these read MRSY…MQLP, HLQG…PEFD, KQEK…KKQR, WANQ…STST, and SSSG…DVYS. Positions 142–151 are enriched in basic and acidic residues; it reads SVEKAKENVA. Residues 153–164 are compositionally biased toward low complexity; the sequence is ESGTPESGGSTS. The segment at residues 164–224 is a DNA-binding region (homeobox); sequence SAPKSKKQRL…QNRRAKSKLI (61 aa). Composition is skewed to polar residues over residues 604–614 and 630–641; these read WANQLPRQPDS and SHDTSSEYGNKS.

It is found in the nucleus. Functionally, trnascription factor that regulates the expression of the homocitrate synthase (HCS) lys4. The chain is Homeobox transcription factor phx1 (phx1) from Schizosaccharomyces pombe (strain 972 / ATCC 24843) (Fission yeast).